Consider the following 388-residue polypeptide: Alanine racemase, catabolic (388 aa).

The active-site Proton acceptor; specific for D-alanine is the K46. Position 46 is an N6-(pyridoxal phosphate)lysine (K46). R145 contributes to the substrate binding site. Residue Y267 is the Proton acceptor; specific for L-alanine of the active site. Substrate is bound at residue M315.

This sequence belongs to the alanine racemase family. Pyridoxal 5'-phosphate serves as cofactor.

The catalysed reaction is L-alanine = D-alanine. Functionally, isomerizes L-alanine to D-alanine which is then oxidized to pyruvate by DadA. This Agrobacterium fabrum (strain C58 / ATCC 33970) (Agrobacterium tumefaciens (strain C58)) protein is Alanine racemase, catabolic (dadB).